The primary structure comprises 37 residues: Large ribosomal subunit protein bL36 (37 aa).

Belongs to the bacterial ribosomal protein bL36 family.

The protein is Large ribosomal subunit protein bL36 of Aliarcobacter butzleri (strain RM4018) (Arcobacter butzleri).